Consider the following 851-residue polypeptide: MKVMGIQRNCQQWWIWGILGFWMLMICNGMGNLWVTVYYGVPVWKDASPTLFCASDAKAYDTEVHNVWGTFACVPTDPSPQELGLENVTENFNMWKNDMVEQMHQDIISLWDQGLKPCVKLTPLCVTLNCNAIKNNTKVTNNSINSANDEMKNCSFNITTELRDKKRKAYALFYKLDIVPLNNGSTDYRLINCNTSTITQACPKVSLDPIPIHYCAPAGYAILKCRDKTFTGTGPCHNVSTVQCTHGIKPVVSTQLLLNGSIAEGETIIRFENLTNNAKIIIVQLNESVEITCTRPSNNTRESIRIGPGQTFYATGDIIGDIRQAHCNISEEKWNKTLQKVKEKLQKHFPNKTIEFKPSSGGDLEITTHSFNCGGEFFYCNTSNLFNSTKLELFNSSTNLNITLQCRIKQIINMWQGVGRAMYAPPIEGIIMCRSNITGLLLTRDGAKEPHSTKEIFRPEGGDMRDNWRSELYKYKVVEIKPLGVAPTKPKRRVVEREKRAALGALFLGFLGAAGSTMGAASITLTVQARQLLSGIVQQQSNLLKAIEAQQHMLQLTVWGIKQLQTRVLAIERHLRDQQLLGIWGCSGKLICTTAVPWNSSWSNKSQEEIWDNMTWMQWDREISNYTDIIYNLLEVSQNQQDKNEKDLLALDKWENLWNWFNITNWLWYIKIFIMIVGGVIGLRIIFAVLSIVNRVRQGYSPLSFQTLIPHPRGPDRLGGIEEEGGEQGRDRSIRLVNGFLAIFWDDLRSLCLFSYHRLRDLILIAARTVELLGRSSLKGLQRGWETLKYLGSLVQYWGLELKKSAINLLNTTAIVVGEGTDRFIELIQRIWRAFCNIPRRIRQGLEAALQ.

Residues 1 to 31 form the signal peptide; the sequence is MKVMGIQRNCQQWWIWGILGFWMLMICNGMG. Over 32–672 the chain is Extracellular; it reads NLWVTVYYGV…ITNWLWYIKI (641 aa). Cys53 and Cys73 are joined by a disulfide. Asn87, Asn135, Asn141, Asn153, Asn157, Asn183, and Asn194 each carry an N-linked (GlcNAc...) asparagine; by host glycan. Intrachain disulfides connect Cys118–Cys202, Cys125–Cys193, Cys130–Cys154, Cys215–Cys244, and Cys225–Cys236. Residues 130–153 are V1; it reads CNAIKNNTKVTNNSINSANDEMKN. Positions 154–193 are V2; it reads CSFNITTELRDKKRKAYALFYKLDIVPLNNGSTDYRLINC. Asn238, Asn259, Asn273, Asn286, Asn298, Asn328, Asn335, and Asn351 each carry an N-linked (GlcNAc...) asparagine; by host glycan. Residues 293 to 326 form a V3 region; it reads CTRPSNNTRESIRIGPGQTFYATGDIIGDIRQAH. Cys293 and Cys327 are oxidised to a cystine. Residues 359 to 369 are CD4-binding loop; it reads SSGGDLEITTH. 2 disulfides stabilise this stretch: Cys373-Cys433 and Cys380-Cys406. The interval 380 to 406 is V4; sequence CNTSNLFNSTKLELFNSSTNLNITLQC. Residues Asn381, Asn387, Asn395, Asn401, and Asn436 are each glycosylated (N-linked (GlcNAc...) asparagine; by host). 2 V5 regions span residues 449–460 and 451–460; these read EPHSTKEIFRPE and HSTKEIFRPE. Positions 501–520 are fusion peptide; sequence AALGALFLGFLGAAGSTMGA. The segment at 562-580 is immunosuppression; that stretch reads KQLQTRVLAIERHLRDQQL. Cysteines 586 and 592 form a disulfide. 5 N-linked (GlcNAc...) asparagine; by host glycosylation sites follow: Asn599, Asn604, Asn613, Asn625, and Asn662. A coiled-coil region spans residues 621-655; it reads REISNYTDIIYNLLEVSQNQQDKNEKDLLALDKWE. Positions 650–671 are MPER; binding to GalCer; that stretch reads ALDKWENLWNWFNITNWLWYIK. The helical transmembrane segment at 673-693 threads the bilayer; sequence FIMIVGGVIGLRIIFAVLSIV. The Cytoplasmic segment spans residues 694 to 851; that stretch reads NRVRQGYSPL…IRQGLEAALQ (158 aa). The short motif at 700–703 is the YXXL motif; contains endocytosis signal element; it reads YSPL. Cys752 carries the S-palmitoyl cysteine; by host lipid modification.

The protein belongs to the HIV-1 env protein family. In terms of assembly, the mature envelope protein (Env) consists of a homotrimer of non-covalently associated gp120-gp41 heterodimers. The resulting complex protrudes from the virus surface as a spike. There seems to be as few as 10 spikes on the average virion. Interacts with host CD4, CCR5 and CXCR4. Gp120 also interacts with the C-type lectins CD209/DC-SIGN and CLEC4M/DC-SIGNR (collectively referred to as DC-SIGN(R)). Gp120 and gp41 interact with GalCer. Gp120 interacts with host ITGA4/ITGB7 complex; on CD4+ T-cells, this interaction results in rapid activation of integrin ITGAL/LFA-1, which facilitates efficient cell-to-cell spreading of HIV-1. Gp120 interacts with cell-associated heparan sulfate; this interaction increases virus infectivity on permissive cells and may be involved in infection of CD4- cells. As to quaternary structure, the mature envelope protein (Env) consists of a homotrimer of non-covalently associated gp120-gp41 heterodimers. The resulting complex protrudes from the virus surface as a spike. There seems to be as few as 10 spikes on the average virion. Post-translationally, highly glycosylated by host. The high number of glycan on the protein is reffered to as 'glycan shield' because it contributes to hide protein sequence from adaptive immune system. Palmitoylation of the transmembrane protein and of Env polyprotein (prior to its proteolytic cleavage) is essential for their association with host cell membrane lipid rafts. Palmitoylation is therefore required for envelope trafficking to classical lipid rafts, but not for viral replication. In terms of processing, specific enzymatic cleavages in vivo yield mature proteins. Envelope glycoproteins are synthesized as an inactive precursor that is heavily N-glycosylated and processed likely by host cell furin in the Golgi to yield the mature SU and TM proteins. The cleavage site between SU and TM requires the minimal sequence [KR]-X-[KR]-R. About 2 of the 9 disulfide bonds of gp41 are reduced by P4HB/PDI, following binding to CD4 receptor.

It is found in the virion membrane. It localises to the host cell membrane. The protein resides in the host endosome membrane. Functionally, oligomerizes in the host endoplasmic reticulum into predominantly trimers. In a second time, gp160 transits in the host Golgi, where glycosylation is completed. The precursor is then proteolytically cleaved in the trans-Golgi and thereby activated by cellular furin or furin-like proteases to produce gp120 and gp41. In terms of biological role, attaches the virus to the host lymphoid cell by binding to the primary receptor CD4. This interaction induces a structural rearrangement creating a high affinity binding site for a chemokine coreceptor like CXCR4 and/or CCR5. Acts as a ligand for CD209/DC-SIGN and CLEC4M/DC-SIGNR, which are respectively found on dendritic cells (DCs), and on endothelial cells of liver sinusoids and lymph node sinuses. These interactions allow capture of viral particles at mucosal surfaces by these cells and subsequent transmission to permissive cells. HIV subverts the migration properties of dendritic cells to gain access to CD4+ T-cells in lymph nodes. Virus transmission to permissive T-cells occurs either in trans (without DCs infection, through viral capture and transmission), or in cis (following DCs productive infection, through the usual CD4-gp120 interaction), thereby inducing a robust infection. In trans infection, bound virions remain infectious over days and it is proposed that they are not degraded, but protected in non-lysosomal acidic organelles within the DCs close to the cell membrane thus contributing to the viral infectious potential during DCs' migration from the periphery to the lymphoid tissues. On arrival at lymphoid tissues, intact virions recycle back to DCs' cell surface allowing virus transmission to CD4+ T-cells. Acts as a class I viral fusion protein. Under the current model, the protein has at least 3 conformational states: pre-fusion native state, pre-hairpin intermediate state, and post-fusion hairpin state. During fusion of viral and target intracellular membranes, the coiled coil regions (heptad repeats) assume a trimer-of-hairpins structure, positioning the fusion peptide in close proximity to the C-terminal region of the ectodomain. The formation of this structure appears to drive apposition and subsequent fusion of viral and target cell membranes. Complete fusion occurs in host cell endosomes and is dynamin-dependent, however some lipid transfer might occur at the plasma membrane. The virus undergoes clathrin-dependent internalization long before endosomal fusion, thus minimizing the surface exposure of conserved viral epitopes during fusion and reducing the efficacy of inhibitors targeting these epitopes. Membranes fusion leads to delivery of the nucleocapsid into the cytoplasm. This is Envelope glycoprotein gp160 from Homo sapiens (Human).